Here is a 625-residue protein sequence, read N- to C-terminus: Interleukin-1 receptor-associated kinase-like 2 (625 aa).

The Death domain occupies Leu13 to Lys94. The disordered stretch occupies residues Lys111 to Ser181. Ser144 is modified (phosphoserine). Residues Leu169–Ser181 are compositionally biased toward polar residues. Residues Phe210–Leu489 form the Protein kinase domain. ATP-binding positions include Ile216–Val224, Lys237, and Lys337–Asn340. The disordered stretch occupies residues Leu510–Ser540. A compositionally biased stretch (polar residues) spans Ser516–Pro526.

This sequence belongs to the protein kinase superfamily. TKL Ser/Thr protein kinase family. Pelle subfamily. In terms of assembly, interacts with MYD88. IL-1 stimulation leads to the formation of a signaling complex which dissociates from the IL-1 receptor following the binding of PELI1. In terms of tissue distribution, expressed in spleen, thymus, prostate, lung, liver, skeletal muscle, kidney, pancreas and peripheral blood leukocytes.

Binds to the IL-1 type I receptor following IL-1 engagement, triggering intracellular signaling cascades leading to transcriptional up-regulation and mRNA stabilization. The protein is Interleukin-1 receptor-associated kinase-like 2 (IRAK2) of Homo sapiens (Human).